Reading from the N-terminus, the 78-residue chain is 4-methyl-3-hydroxyanthranilic acid carrier protein (78 aa).

S33 bears the O-(pantetheine 4'-phosphoryl)serine mark.

It belongs to the acyl carrier protein (ACP) family. 4'-phosphopantetheine is transferred from CoA to a specific serine of the apo-form of this carrier protein.

It participates in antibiotic biosynthesis. In terms of biological role, involved in the biosynthesis of actinomycin. Acts as a carrier in the transfer and thioesterification of 4-methyl-3-hydroxyanthranilic acid (4-MHA). This chain is 4-methyl-3-hydroxyanthranilic acid carrier protein, found in Streptomyces anulatus (Streptomyces chrysomallus).